Consider the following 248-residue polypeptide: N-acylneuraminate-9-phosphatase (248 aa).

Aspartate 12 is a binding site for Mg(2+). Residues leucine 13, aspartate 14, threonine 131, asparagine 132, and lysine 164 each coordinate phosphate. Position 14 (aspartate 14) interacts with Mg(2+). Aspartate 189 serves as a coordination point for Mg(2+).

The protein belongs to the HAD-like hydrolase superfamily. NANP family. Mg(2+) is required as a cofactor.

It catalyses the reaction N-acetylneuraminate 9-phosphate + H2O = N-acetylneuraminate + phosphate. It carries out the reaction N-glycoloylneuraminate 9-phosphate + H2O = N-glycoloylneuraminate + phosphate. It participates in amino-sugar metabolism; N-acetylneuraminate biosynthesis. Its activity is regulated as follows. Inhibited by calcium. Inhibited by vanadate, sodium orthovanate and phosphonate. Catalyzes the dephosphorylation of N-acylneuraminate 9-phosphate (Neu5Ac-9-P) to sialic acid N-acetylneuraminic acid (Neu5Ac). May also use N-glycoloylneuraminate 9-phosphate as substrate. This Mus musculus (Mouse) protein is N-acylneuraminate-9-phosphatase.